Consider the following 426-residue polypeptide: Adenylosuccinate synthetase (426 aa).

Residues 11–17 (GDEGKGK) and 39–41 (GHT) each bind GTP. Asp12 (proton acceptor) is an active-site residue. Mg(2+) contacts are provided by Asp12 and Gly39. IMP-binding positions include 12–15 (DEGK), 37–40 (NAGH), Thr130, Arg144, Asn226, Thr241, and Arg305. Residue His40 is the Proton donor of the active site. A substrate-binding site is contributed by 301-307 (VTTGRKR). Residues Arg307, 333-335 (KLD), and 415-417 (GTG) each bind GTP.

The protein belongs to the adenylosuccinate synthetase family. In terms of assembly, homodimer. Mg(2+) serves as cofactor.

The protein resides in the cytoplasm. The enzyme catalyses IMP + L-aspartate + GTP = N(6)-(1,2-dicarboxyethyl)-AMP + GDP + phosphate + 2 H(+). The protein operates within purine metabolism; AMP biosynthesis via de novo pathway; AMP from IMP: step 1/2. Plays an important role in the de novo pathway and in the salvage pathway of purine nucleotide biosynthesis. Catalyzes the first committed step in the biosynthesis of AMP from IMP. The sequence is that of Adenylosuccinate synthetase from Meyerozyma guilliermondii (strain ATCC 6260 / CBS 566 / DSM 6381 / JCM 1539 / NBRC 10279 / NRRL Y-324) (Yeast).